The following is a 384-amino-acid chain: BTB and MATH domain-containing protein 34 (384 aa).

Positions 41-127 form a coiled coil; the sequence is LNGNTTLKRI…ELKFQKEQLK (87 aa). One can recognise an MATH domain in the interval 167 to 277; sequence EFSHTFNSVA…VFNFGEYEEI (111 aa). Positions 317–380 constitute a BTB domain; that stretch reads SDAVMIVKDE…LYGEPALTGR (64 aa).

This is BTB and MATH domain-containing protein 34 (bath-34) from Caenorhabditis elegans.